Here is a 179-residue protein sequence, read N- to C-terminus: GTP-dependent dephospho-CoA kinase (179 aa).

5 residues coordinate GTP: Asp-55, Val-57, Asp-74, Lys-76, and Glu-128.

Belongs to the GTP-dependent DPCK family.

It catalyses the reaction 3'-dephospho-CoA + GTP = GDP + CoA + H(+). The protein operates within cofactor biosynthesis; coenzyme A biosynthesis. Catalyzes the GTP-dependent phosphorylation of the 3'-hydroxyl group of dephosphocoenzyme A to form coenzyme A (CoA). The sequence is that of GTP-dependent dephospho-CoA kinase from Saccharolobus islandicus (strain M.16.27) (Sulfolobus islandicus).